Here is a 281-residue protein sequence, read N- to C-terminus: MSLKRCRALPVVAIVALVASGVITFIWSQQRRLIYFPSAGPVPSASSVLPAGRDVVVETQDGMRLGGWYFPHTSGGSGPAVLVCNGNAGDRSMRAELAVALHGLGLSVLLFDYRGYGGNPGRPSEQGLAADARAAQEWLSGQSDVDPARIAYFGESLGAAVAVGLAVQRPPAALVLRSPFTSLAEVGAVHYPWLPLRRLLLDHYPSIERIASVHAPVLVIAGGSDDIVPATLSERLVAAAAEPKRYVVVPGVGHNDPELLDGRVMLDAIRRFLTETAVLGQ.

The next 4 helical transmembrane spans lie at 8–28, 97–117, 147–167, and 210–230; these read ALPV…FIWS, LAVA…RGYG, PARI…GLAV, and IASV…IVPA.

This sequence to S.pombe bem46 and yeast YNL320w.

It localises to the cell membrane. This is an uncharacterized protein from Mycobacterium tuberculosis (strain CDC 1551 / Oshkosh).